The following is a 461-amino-acid chain: mRNA cap guanine-N(7) methyltransferase (461 aa).

The interval 1 to 117 (MESSVKASVD…RKLQPQDALE (117 aa)) is disordered. Residues serine 11, serine 15, serine 16, and serine 58 each carry the phosphoserine modification. 2 stretches are compositionally biased toward polar residues: residues 14–29 (ESSPGVNETAAASGQR) and 49–58 (EQNSSYVQDS). Over residues 65 to 93 (LDVEIILDEKHSEDDGGASKRSKLERGGG) the composition is skewed to basic and acidic residues. 2 positions are modified to phosphoserine: serine 94 and serine 99. The short motif at 107-109 (KRK) is the Nuclear localization signal element. Residues 152–460 (SRIFYLRNFN…IYLVFAFEKQ (309 aa)) form the mRNA cap 0 methyltransferase domain. 161–162 (NN) contacts mRNA. 6 residues coordinate S-adenosyl-L-methionine: lysine 165, glycine 190, aspartate 212, aspartate 246, glutamine 269, and tyrosine 274.

Belongs to the class I-like SAM-binding methyltransferase superfamily. mRNA cap 0 methyltransferase family. Interacts with importin alpha, leading to stimulate both RNA-binding and methyltransferase activity. Interaction with importin alpha and beta is required for its nuclear localization, importin beta dissociating in response to RanGTP, allowing RNMT-importin alpha to bind RNA substrates. Interacts with elongating form of polymerase II and RNGTT. Interacts with RAMAC, this interaction significantly enhances RNA-binding and cap methyltransferase activity.

The protein resides in the nucleus. It carries out the reaction a 5'-end (5'-triphosphoguanosine)-ribonucleoside in mRNA + S-adenosyl-L-methionine = a 5'-end (N(7)-methyl 5'-triphosphoguanosine)-ribonucleoside in mRNA + S-adenosyl-L-homocysteine. Its activity is regulated as follows. Methyltransferase activity is activated by RAMAC. In terms of biological role, catalytic subunit of the mRNA-capping methyltransferase RNMT:RAMAC complex that methylates the N7 position of the added guanosine to the 5'-cap structure of mRNAs. Binds RNA containing 5'-terminal GpppC. The polypeptide is mRNA cap guanine-N(7) methyltransferase (Rnmt) (Rattus norvegicus (Rat)).